The following is a 135-amino-acid chain: Flagellar assembly factor FliW 2 (135 aa).

Belongs to the FliW family. In terms of assembly, interacts with translational regulator CsrA and flagellin(s).

The protein localises to the cytoplasm. Its function is as follows. Acts as an anti-CsrA protein, binds CsrA and prevents it from repressing translation of its target genes, one of which is flagellin. Binds to flagellin and participates in the assembly of the flagellum. This chain is Flagellar assembly factor FliW 2, found in Helicobacter acinonychis (strain Sheeba).